The sequence spans 94 residues: Small ribosomal subunit protein uS17 (94 aa).

A disordered region spans residues 1–22 (MASSSTEGQAAARGRKKSWTGK).

Belongs to the universal ribosomal protein uS17 family. Part of the 30S ribosomal subunit.

Its function is as follows. One of the primary rRNA binding proteins, it binds specifically to the 5'-end of 16S ribosomal RNA. This is Small ribosomal subunit protein uS17 from Chlorobium luteolum (strain DSM 273 / BCRC 81028 / 2530) (Pelodictyon luteolum).